Consider the following 309-residue polypeptide: Homoserine kinase (309 aa).

An ATP-binding site is contributed by 95 to 105 (PQSRGLGSSAA).

The protein belongs to the GHMP kinase family. Homoserine kinase subfamily.

The protein resides in the cytoplasm. It catalyses the reaction L-homoserine + ATP = O-phospho-L-homoserine + ADP + H(+). It participates in amino-acid biosynthesis; L-threonine biosynthesis; L-threonine from L-aspartate: step 4/5. Its function is as follows. Catalyzes the ATP-dependent phosphorylation of L-homoserine to L-homoserine phosphate. This is Homoserine kinase from Corynebacterium glutamicum (strain R).